A 308-amino-acid chain; its full sequence is Methionyl-tRNA formyltransferase (308 aa).

109-112 is a binding site for (6S)-5,6,7,8-tetrahydrofolate; the sequence is SLLP.

This sequence belongs to the Fmt family.

It catalyses the reaction L-methionyl-tRNA(fMet) + (6R)-10-formyltetrahydrofolate = N-formyl-L-methionyl-tRNA(fMet) + (6S)-5,6,7,8-tetrahydrofolate + H(+). Functionally, attaches a formyl group to the free amino group of methionyl-tRNA(fMet). The formyl group appears to play a dual role in the initiator identity of N-formylmethionyl-tRNA by promoting its recognition by IF2 and preventing the misappropriation of this tRNA by the elongation apparatus. The polypeptide is Methionyl-tRNA formyltransferase (Caulobacter vibrioides (strain NA1000 / CB15N) (Caulobacter crescentus)).